A 166-amino-acid polypeptide reads, in one-letter code: Large ribosomal subunit protein mL41 (166 aa).

Residues 1–26 (MNNCIKVVPIALRCQQRTISTSSVLE) constitute a mitochondrion transit peptide. A disordered region spans residues 136-166 (KDGSAKEPSVNEQLTPEEALQRARKTGSDIF).

It belongs to the mitochondrion-specific ribosomal protein mL41 family. In terms of assembly, component of the mitochondrial ribosome large subunit (39S) which comprises a 16S rRNA and about 50 distinct proteins.

It is found in the mitochondrion. In Drosophila melanogaster (Fruit fly), this protein is Large ribosomal subunit protein mL41 (mRpL41).